Consider the following 257-residue polypeptide: UPF0246 protein AHA_3667 (257 aa).

This sequence belongs to the UPF0246 family.

The sequence is that of UPF0246 protein AHA_3667 from Aeromonas hydrophila subsp. hydrophila (strain ATCC 7966 / DSM 30187 / BCRC 13018 / CCUG 14551 / JCM 1027 / KCTC 2358 / NCIMB 9240 / NCTC 8049).